Reading from the N-terminus, the 334-residue chain is NAC domain-containing protein 66 (334 aa).

Residues 11 to 175 form the NAC domain; the sequence is VPPGFRFHPT…GWVVCRVFKK (165 aa). Residues 111–181 mediate DNA binding; it reads IGMRKTLVFY…VFKKNNLCKN (71 aa).

In terms of tissue distribution, mostly expressed in anthers. Also present in pollen, base of siliques and inflorescence stems.

It is found in the nucleus. Its function is as follows. Transcription activator of genes involved in biosynthesis of secondary walls. Together with NST1, required for the secondary cell wall thickening of the anther endocethium, which is necessary for anther dehiscence. May also regulate the secondary cell wall lignification of other tissues such as tracheary elements. This chain is NAC domain-containing protein 66 (NAC066), found in Arabidopsis thaliana (Mouse-ear cress).